A 328-amino-acid chain; its full sequence is L-lactate dehydrogenase (328 aa).

Residues Val18, Glu39, Lys46, Tyr71, and 85–86 contribute to the NAD(+) site; that span reads GA. The substrate site is built by Gln88 and Arg94. NAD(+)-binding positions include Ser107, 124–126, and Ser149; that span reads AAN. A substrate-binding site is contributed by 126-129; that stretch reads NPVD. Position 154–157 (154–157) interacts with substrate; it reads DSAR. Residues Arg159 and His174 each contribute to the beta-D-fructose 1,6-bisphosphate site. The active-site Proton acceptor is the His181. Tyr226 is subject to Phosphotyrosine. Position 235 (Thr235) interacts with substrate.

This sequence belongs to the LDH/MDH superfamily. LDH family. Homotetramer.

Its subcellular location is the cytoplasm. The catalysed reaction is (S)-lactate + NAD(+) = pyruvate + NADH + H(+). It participates in fermentation; pyruvate fermentation to lactate; (S)-lactate from pyruvate: step 1/1. Allosterically activated by fructose 1,6-bisphosphate (FBP). Catalyzes the conversion of lactate to pyruvate. This Streptococcus pneumoniae (strain 70585) protein is L-lactate dehydrogenase.